The primary structure comprises 475 residues: Ribulose bisphosphate carboxylase large chain (475 aa).

Positions 1–2 are excised as a propeptide; that stretch reads MV. At P3 the chain carries N-acetylproline. K14 is modified (N6,N6,N6-trimethyllysine). Substrate-binding residues include N123 and T173. The Proton acceptor role is filled by K175. K177 lines the substrate pocket. Mg(2+) contacts are provided by K201, D203, and E204. An N6-carboxylysine modification is found at K201. H294 serves as the catalytic Proton acceptor. Substrate is bound by residues R295, H327, and S379.

The protein belongs to the RuBisCO large chain family. Type I subfamily. As to quaternary structure, heterohexadecamer of 8 large chains and 8 small chains; disulfide-linked. The disulfide link is formed within the large subunit homodimers. It depends on Mg(2+) as a cofactor. In terms of processing, the disulfide bond which can form in the large chain dimeric partners within the hexadecamer appears to be associated with oxidative stress and protein turnover.

The protein localises to the plastid. It is found in the chloroplast. It catalyses the reaction 2 (2R)-3-phosphoglycerate + 2 H(+) = D-ribulose 1,5-bisphosphate + CO2 + H2O. The catalysed reaction is D-ribulose 1,5-bisphosphate + O2 = 2-phosphoglycolate + (2R)-3-phosphoglycerate + 2 H(+). In terms of biological role, ruBisCO catalyzes two reactions: the carboxylation of D-ribulose 1,5-bisphosphate, the primary event in carbon dioxide fixation, as well as the oxidative fragmentation of the pentose substrate in the photorespiration process. Both reactions occur simultaneously and in competition at the same active site. The protein is Ribulose bisphosphate carboxylase large chain of Tetradesmus obliquus (Green alga).